Reading from the N-terminus, the 419-residue chain is Chaperone protein dnaJ 2 (419 aa).

The J domain maps to 14-75 (KFYEILGVPK…EKREIYDQYG (62 aa)). Residues 136-220 (GTTKKLSLSR…CKGEKVVSEK (85 aa)) form a CR-type zinc finger. Cysteine 149, cysteine 152, cysteine 165, cysteine 168, cysteine 192, cysteine 195, cysteine 208, and cysteine 211 together coordinate Zn(2+). CXXCXGXG motif repeat units follow at residues 149–156 (CSKCNGKG), 165–172 (CGGCQGSG), 192–199 (CNDCKGTG), and 208–215 (CPQCKGEK). The span at 378-391 (TTLHDVNIEDEMKR) shows a compositional bias: basic and acidic residues. A disordered region spans residues 378-419 (TTLHDVNIEDEMKRKAQAQREAYDDDEEDHPGGAQRVQCAQQ). Cysteine 416 carries the post-translational modification Cysteine methyl ester. Cysteine 416 carries the S-farnesyl cysteine lipid modification. Residues 417–419 (AQQ) constitute a propeptide, removed in mature form.

This sequence belongs to the DnaJ family. A/I subfamily. In terms of assembly, homodimer. Zn(2+) is required as a cofactor. Post-translationally, farnesylated. Expressed in both etiolated and light-grown tissues.

Its subcellular location is the membrane. Plays a continuous role in plant development probably in the structural organization of compartments. The sequence is that of Chaperone protein dnaJ 2 (ATJ2) from Arabidopsis thaliana (Mouse-ear cress).